The following is a 1121-amino-acid chain: CRISPR-associated endonuclease Cas9 1 (1121 aa).

Residue D9 is the For RuvC-like nuclease domain of the active site. Mg(2+)-binding residues include D9, E509, and E513. The region spanning 516–684 (EDDEKKAIQK…VRKKFIERNL (169 aa)) is the HNH Cas9-type domain. H599 (proton acceptor for HNH nuclease domain) is an active-site residue. Position 738 (H738) interacts with Mg(2+).

It belongs to the CRISPR-associated protein Cas9 family. Subtype II-A subfamily. Monomer. Binds crRNA and tracrRNA. The cofactor is Mg(2+).

CRISPR (clustered regularly interspaced short palindromic repeat) is an adaptive immune system that provides protection against mobile genetic elements (viruses, transposable elements and conjugative plasmids). CRISPR clusters contain spacers, sequences complementary to antecedent mobile elements, and target invading nucleic acids. CRISPR clusters are transcribed and processed into CRISPR RNA (crRNA). In type II CRISPR systems correct processing of pre-crRNA requires a trans-encoded small RNA (tracrRNA), endogenous ribonuclease 3 (rnc) and this protein. The tracrRNA serves as a guide for ribonuclease 3-aided processing of pre-crRNA. Subsequently Cas9/crRNA/tracrRNA endonucleolytically cleaves linear or circular dsDNA target complementary to the spacer; Cas9 is inactive in the absence of the 2 guide RNAs (gRNA). Cas9 recognizes the protospacer adjacent motif (PAM) in the CRISPR repeat sequences to help distinguish self versus nonself, as targets within the bacterial CRISPR locus do not have PAMs. PAM recognition is also required for catalytic activity. Cuts target DNA when Cas9 and gRNAs are mixed. The sequence is that of CRISPR-associated endonuclease Cas9 1 from Streptococcus thermophilus (strain ATCC BAA-491 / LMD-9).